The sequence spans 413 residues: ATP-dependent RNA helicase RhlB (413 aa).

The Q motif signature appears at 9–37 (QRFADLPLHPQILAALNDQNFEYCTPIQA). The 178-residue stretch at 40-217 (LPLTLQGKDV…FEDMNDPEYI (178 aa)) folds into the Helicase ATP-binding domain. 53-60 (AQTGTGKT) lines the ATP pocket. Positions 163-166 (DEAD) match the DEAD box motif. The Helicase C-terminal domain maps to 241–388 (KMALLMTLLE…VSQYDPDSLI (148 aa)).

Belongs to the DEAD box helicase family. RhlB subfamily. Component of the RNA degradosome, which is a multiprotein complex involved in RNA processing and mRNA degradation.

It localises to the cytoplasm. It carries out the reaction ATP + H2O = ADP + phosphate + H(+). Its function is as follows. DEAD-box RNA helicase involved in RNA degradation. Has RNA-dependent ATPase activity and unwinds double-stranded RNA. This is ATP-dependent RNA helicase RhlB from Actinobacillus succinogenes (strain ATCC 55618 / DSM 22257 / CCUG 43843 / 130Z).